The following is a 203-amino-acid chain: Ras-related protein RABG3b (203 aa).

15-22 (GDSGVGKT) is a GTP binding site. The short motif at 37–45 (YKATIGADF) is the Effector region element. Residues 63-67 (DTAGQ), 125-128 (NKVD), and 158-159 (SA) contribute to the GTP site. S-geranylgeranyl cysteine attachment occurs at residues Cys201 and Cys203. At Cys203 the chain carries Cysteine methyl ester.

This sequence belongs to the small GTPase superfamily. Rab family. Interacts with VPS39. As to expression, expressed in xylem cells of inflorescence stems.

It localises to the cell membrane. Intracellular vesicle trafficking and protein transport. Functions in autophagy. Involved in xylem and tracheary element differentiation. The sequence is that of Ras-related protein RABG3b (RABG3B) from Arabidopsis thaliana (Mouse-ear cress).